The sequence spans 493 residues: Cysteine--tRNA ligase (493 aa).

Cysteine 31 contributes to the Zn(2+) binding site. The 'HIGH' region motif lies at 33-43 (PTVYGDAHLGH). 3 residues coordinate Zn(2+): cysteine 226, histidine 251, and glutamate 255. The 'KMSKS' region signature appears at 283–287 (KMGKS). Lysine 286 is a binding site for ATP.

It belongs to the class-I aminoacyl-tRNA synthetase family. In terms of assembly, monomer. The cofactor is Zn(2+).

The protein localises to the cytoplasm. The enzyme catalyses tRNA(Cys) + L-cysteine + ATP = L-cysteinyl-tRNA(Cys) + AMP + diphosphate. In Phocaeicola vulgatus (strain ATCC 8482 / DSM 1447 / JCM 5826 / CCUG 4940 / NBRC 14291 / NCTC 11154) (Bacteroides vulgatus), this protein is Cysteine--tRNA ligase.